The primary structure comprises 140 residues: MLKIRNYNPSDWSPSWVRSKQPRKQRKYIINAPLHRRRKMMRSPLSKELREKLGIRNVPIKVGDVVRVERGNFRGKEGQVIDIDPKYYRVYLSLDTDRQYPFHPSKLTIIKLDLSDKKRREALKIDDSKYEELKKEGLAI.

The protein belongs to the universal ribosomal protein uL24 family. Part of the 50S ribosomal subunit.

One of two assembly initiator proteins, it binds directly to the 5'-end of the 23S rRNA, where it nucleates assembly of the 50S subunit. In terms of biological role, located at the polypeptide exit tunnel on the outside of the subunit. The chain is Large ribosomal subunit protein uL24 from Nanoarchaeum equitans (strain Kin4-M).